Consider the following 84-residue polypeptide: Acetylcholine receptor subunit alpha (84 aa).

2 disulfides stabilise this stretch: Cys7–Cys21 and Cys71–Cys72. Asn20 is a glycosylation site (N-linked (GlcNAc...) asparagine).

It belongs to the ligand-gated ion channel (TC 1.A.9) family. Acetylcholine receptor (TC 1.A.9.1) subfamily. Alpha-1/CHRNA1 sub-subfamily. One of the alpha chains that assemble within the acetylcholine receptor, a pentamer of two alpha chains, a beta, a delta, and a gamma (in immature muscle) or epsilon (in mature muscle) chains. The muscle heteropentamer composed of alpha-1, beta-1, delta, epsilon subunits interacts with the alpha-conotoxin ImII.

The protein resides in the postsynaptic cell membrane. It localises to the cell membrane. It catalyses the reaction K(+)(in) = K(+)(out). It carries out the reaction Na(+)(in) = Na(+)(out). In terms of biological role, upon acetylcholine binding, the AChR responds by an extensive change in conformation that affects all subunits and leads to opening of an ion-conducting channel across the plasma membrane. This is Acetylcholine receptor subunit alpha (CHRNA1) from Felis catus (Cat).